The chain runs to 255 residues: 5-oxoprolinase subunit A (255 aa).

Belongs to the LamB/PxpA family. As to quaternary structure, forms a complex composed of PxpA, PxpB and PxpC.

The catalysed reaction is 5-oxo-L-proline + ATP + 2 H2O = L-glutamate + ADP + phosphate + H(+). Catalyzes the cleavage of 5-oxoproline to form L-glutamate coupled to the hydrolysis of ATP to ADP and inorganic phosphate. The chain is 5-oxoprolinase subunit A from Nitrobacter hamburgensis (strain DSM 10229 / NCIMB 13809 / X14).